Reading from the N-terminus, the 513-residue chain is Activin receptor type-2A (513 aa).

Positions Met-1–Gly-19 are cleaved as a signal peptide. The Extracellular segment spans residues Ala-20–Pro-135. Cystine bridges form between Cys-30/Cys-60, Cys-50/Cys-78, Cys-85/Cys-104, Cys-91/Cys-103, and Cys-105/Cys-110. N-linked (GlcNAc...) asparagine glycosylation is found at Asn-43 and Asn-66. Residues Tyr-136–Tyr-161 traverse the membrane as a helical segment. The Cytoplasmic segment spans residues Arg-162 to Leu-513. The 294-residue stretch at Leu-192 to Leu-485 folds into the Protein kinase domain. Residues Lys-198–Val-206 and Lys-219 each bind ATP. The active-site Proton acceptor is Asp-322.

It belongs to the protein kinase superfamily. TKL Ser/Thr protein kinase family. TGFB receptor subfamily. Part of a complex consisting of MAGI2/ARIP1, ACVR2A, ACVR1B and SMAD3. Interacts with MAGI2/ARIP1. Interacts with type I receptor ACVR1. Interacts with BMP7. Interacts with TSC22D1/TSC-22. Interacts with activin A/INHBA. Mg(2+) serves as cofactor. Mn(2+) is required as a cofactor.

The protein resides in the cell membrane. It catalyses the reaction L-threonyl-[receptor-protein] + ATP = O-phospho-L-threonyl-[receptor-protein] + ADP + H(+). The catalysed reaction is L-seryl-[receptor-protein] + ATP = O-phospho-L-seryl-[receptor-protein] + ADP + H(+). Its function is as follows. On ligand binding, forms a receptor complex consisting of two type II and two type I transmembrane serine/threonine kinases. Type II receptors phosphorylate and activate type I receptors which autophosphorylate, then bind and activate SMAD transcriptional regulators. Receptor for activin A, activin B and inhibin A. Mediates induction of adipogenesis by GDF6. This chain is Activin receptor type-2A, found in Rattus norvegicus (Rat).